A 432-amino-acid polypeptide reads, in one-letter code: Tyrosine-protein phosphatase non-receptor type 1 (432 aa).

Position 1 is an N-acetylmethionine (M1). In terms of domain architecture, Tyrosine-protein phosphatase spans 3–277 (MEKEFEEIDK…RFSYLAVIEG (275 aa)). Y20 bears the Phosphotyrosine mark. S50 carries the phosphoserine; by CLK1, CLK2 and PKB/AKT1 or PKB/AKT2 modification. At Y66 the chain carries Phosphotyrosine; by EGFR. Residues D181 and 215–221 (CSAGIGR) contribute to the substrate site. C215 (phosphocysteine intermediate) is an active-site residue. At C215 the chain carries Cysteine persulfide. S-nitrosocysteine; in reversibly inhibited form is present on C215. Phosphoserine; by CLK1 and CLK2 is present on residues S242 and S243. Q262 is a substrate binding site. Disordered regions lie at residues 297 to 322 (EDLDLPPEHVPPPPRPPKRTLEPHNG) and 335 to 399 (SEET…EEHK). Phosphoserine occurs at positions 335, 362, and 364. Positions 354–364 (SSAMHSVSSMS) are enriched in low complexity. Position 367 is a phosphothreonine (T367).

The protein belongs to the protein-tyrosine phosphatase family. Non-receptor class 1 subfamily. Interacts with EPHA3 (phosphorylated); dephosphorylates EPHA3 and may regulate its trafficking and function. Interacts with MET. Interacts with NCK1. Post-translationally, ser-50 is the major site of phosphorylation as compared to Ser-242 and Ser-243. Activated by phosphorylation at Ser-50. S-nitrosylation of Cys-215 inactivates the enzyme activity. In terms of processing, sulfhydration at Cys-215 following endoplasmic reticulum stress inactivates the enzyme activity, promoting EIF2AK3/PERK activity. As to expression, most abundant in testis. Also found in kidney, spleen, muscle, liver, heart and brain.

The protein localises to the endoplasmic reticulum membrane. It catalyses the reaction O-phospho-L-tyrosyl-[protein] + H2O = L-tyrosyl-[protein] + phosphate. Its function is as follows. Tyrosine-protein phosphatase which acts as a regulator of endoplasmic reticulum unfolded protein response. Mediates dephosphorylation of EIF2AK3/PERK; inactivating the protein kinase activity of EIF2AK3/PERK. May play an important role in CKII- and p60c-src-induced signal transduction cascades. May regulate the EFNA5-EPHA3 signaling pathway which modulates cell reorganization and cell-cell repulsion. May also regulate the hepatocyte growth factor receptor signaling pathway through dephosphorylation of MET. The polypeptide is Tyrosine-protein phosphatase non-receptor type 1 (Ptpn1) (Mus musculus (Mouse)).